An 882-amino-acid chain; its full sequence is HTH-type transcriptional regulator AlkS (882 aa).

Residue 51–58 (APPGYGKT) coordinates ATP. Positions 815 to 880 (ENKADALLTR…QATIEAERQG (66 aa)) constitute an HTH luxR-type domain. A DNA-binding region (H-T-H motif) is located at residues 839–858 (NKQIATNMHVTEDAIKWHMR).

The protein operates within hydrocarbon metabolism; alkane degradation. Functionally, this protein activates the expression of alkBFGHJKL operon in the presence of alkanes. The protein is HTH-type transcriptional regulator AlkS (alkS) of Ectopseudomonas oleovorans (Pseudomonas oleovorans).